Here is a 194-residue protein sequence, read N- to C-terminus: MRTATIKRQTKETQIEVSLNLDQQSGIQIDTGVGYFDHMLNLLAKHGRFGLVVKATGDLEVDAHHTVEDTGIVLGETLKEALGDKVQIERYGDAMVPMDETLAQVVVDLSGRSYLVFDAELTNPRLGSFETEVTEDFFQALAFAAEMNLHARVLYGRNTHHKIEALFKATGRALRQAVTINPAIEGVNSTKGVI.

Belongs to the imidazoleglycerol-phosphate dehydratase family.

It is found in the cytoplasm. The enzyme catalyses D-erythro-1-(imidazol-4-yl)glycerol 3-phosphate = 3-(imidazol-4-yl)-2-oxopropyl phosphate + H2O. It functions in the pathway amino-acid biosynthesis; L-histidine biosynthesis; L-histidine from 5-phospho-alpha-D-ribose 1-diphosphate: step 6/9. The chain is Imidazoleglycerol-phosphate dehydratase from Limosilactobacillus fermentum (strain NBRC 3956 / LMG 18251) (Lactobacillus fermentum).